Consider the following 321-residue polypeptide: Phospho-N-acetylmuramoyl-pentapeptide-transferase (321 aa).

The next 10 helical transmembrane spans lie at 1–21, 50–70, 76–96, 112–132, 140–160, 176–196, 200–220, 225–245, 250–270, and 300–320; these read MIFI…PILI, MGGL…IIFV, IILL…DDYI, FLAQ…FHLV, IPFV…IVFW, GLAT…SYML, AIGI…PYNL, VFMG…ISIM, LSLI…MLQV, and VVTV…WIGV.

The protein belongs to the glycosyltransferase 4 family. MraY subfamily. The cofactor is Mg(2+).

The protein localises to the cell membrane. It carries out the reaction UDP-N-acetyl-alpha-D-muramoyl-L-alanyl-gamma-D-glutamyl-L-lysyl-D-alanyl-D-alanine + di-trans,octa-cis-undecaprenyl phosphate = Mur2Ac(oyl-L-Ala-gamma-D-Glu-L-Lys-D-Ala-D-Ala)-di-trans,octa-cis-undecaprenyl diphosphate + UMP. Its pathway is cell wall biogenesis; peptidoglycan biosynthesis. In terms of biological role, catalyzes the initial step of the lipid cycle reactions in the biosynthesis of the cell wall peptidoglycan: transfers peptidoglycan precursor phospho-MurNAc-pentapeptide from UDP-MurNAc-pentapeptide onto the lipid carrier undecaprenyl phosphate, yielding undecaprenyl-pyrophosphoryl-MurNAc-pentapeptide, known as lipid I. This chain is Phospho-N-acetylmuramoyl-pentapeptide-transferase, found in Staphylococcus epidermidis (strain ATCC 12228 / FDA PCI 1200).